Here is a 288-residue protein sequence, read N- to C-terminus: 33 kDa chaperonin (288 aa).

2 disulfides stabilise this stretch: Cys235-Cys237 and Cys268-Cys271.

It belongs to the HSP33 family. Under oxidizing conditions two disulfide bonds are formed involving the reactive cysteines. Under reducing conditions zinc is bound to the reactive cysteines and the protein is inactive.

The protein localises to the cytoplasm. Redox regulated molecular chaperone. Protects both thermally unfolding and oxidatively damaged proteins from irreversible aggregation. Plays an important role in the bacterial defense system toward oxidative stress. This is 33 kDa chaperonin from Streptococcus suis (strain 98HAH33).